The chain runs to 86 residues: Progonadoliberin-2 (86 aa).

Positions 1–24 (MVSVARLVFMLGPLLCLGAQLSSS) are cleaved as a signal peptide. Pyrrolidone carboxylic acid is present on glutamine 25. Glycine 34 bears the Glycine amide mark.

The protein belongs to the GnRH family.

It localises to the secreted. Functionally, stimulates the secretion of gonadotropins. In Oncorhynchus mykiss (Rainbow trout), this protein is Progonadoliberin-2 (gnrh2).